We begin with the raw amino-acid sequence, 40 residues long: QVLKYCPKIGYCSSKCSKAEVWAYSPDCKVHCCVPANQKW.

Gln1 carries the post-translational modification Pyrrolidone carboxylic acid. Intrachain disulfides connect Cys6–Cys33, Cys12–Cys28, and Cys16–Cys32.

It belongs to the transferrin family.

In Meleagris gallopavo (Wild turkey), this protein is Meleagrin.